A 330-amino-acid polypeptide reads, in one-letter code: Holliday junction branch migration complex subunit RuvB (330 aa).

The large ATPase domain (RuvB-L) stretch occupies residues 1-181; the sequence is MEDRLVGCRL…FGVINKLELY (181 aa). Residues Leu20, Arg21, Gly62, Lys65, Thr66, Thr67, 128 to 130, Arg171, Tyr181, and Arg218 contribute to the ATP site; that span reads EDY. Residue Thr66 coordinates Mg(2+). Residues 182-252 are small ATPAse domain (RuvB-S); that stretch reads SVEELGQIVK…IARTGLEALE (71 aa). The segment at 255–330 is head domain (RuvB-H); that stretch reads EIGLDAVDRN…AYEHFGLKYE (76 aa). Residues Lys310 and Arg315 each contribute to the DNA site.

The protein belongs to the RuvB family. Homohexamer. Forms an RuvA(8)-RuvB(12)-Holliday junction (HJ) complex. HJ DNA is sandwiched between 2 RuvA tetramers; dsDNA enters through RuvA and exits via RuvB. An RuvB hexamer assembles on each DNA strand where it exits the tetramer. Each RuvB hexamer is contacted by two RuvA subunits (via domain III) on 2 adjacent RuvB subunits; this complex drives branch migration. In the full resolvosome a probable DNA-RuvA(4)-RuvB(12)-RuvC(2) complex forms which resolves the HJ.

The protein localises to the cytoplasm. It catalyses the reaction ATP + H2O = ADP + phosphate + H(+). Functionally, the RuvA-RuvB-RuvC complex processes Holliday junction (HJ) DNA during genetic recombination and DNA repair, while the RuvA-RuvB complex plays an important role in the rescue of blocked DNA replication forks via replication fork reversal (RFR). RuvA specifically binds to HJ cruciform DNA, conferring on it an open structure. The RuvB hexamer acts as an ATP-dependent pump, pulling dsDNA into and through the RuvAB complex. RuvB forms 2 homohexamers on either side of HJ DNA bound by 1 or 2 RuvA tetramers; 4 subunits per hexamer contact DNA at a time. Coordinated motions by a converter formed by DNA-disengaged RuvB subunits stimulates ATP hydrolysis and nucleotide exchange. Immobilization of the converter enables RuvB to convert the ATP-contained energy into a lever motion, pulling 2 nucleotides of DNA out of the RuvA tetramer per ATP hydrolyzed, thus driving DNA branch migration. The RuvB motors rotate together with the DNA substrate, which together with the progressing nucleotide cycle form the mechanistic basis for DNA recombination by continuous HJ branch migration. Branch migration allows RuvC to scan DNA until it finds its consensus sequence, where it cleaves and resolves cruciform DNA. In Acetivibrio thermocellus (strain ATCC 27405 / DSM 1237 / JCM 9322 / NBRC 103400 / NCIMB 10682 / NRRL B-4536 / VPI 7372) (Clostridium thermocellum), this protein is Holliday junction branch migration complex subunit RuvB.